The following is a 363-amino-acid chain: Branched-chain-amino-acid aminotransferase 2 (363 aa).

Lysine 197 carries the post-translational modification N6-(pyridoxal phosphate)lysine.

The protein belongs to the class-IV pyridoxal-phosphate-dependent aminotransferase family. The cofactor is pyridoxal 5'-phosphate.

It catalyses the reaction L-leucine + 2-oxoglutarate = 4-methyl-2-oxopentanoate + L-glutamate. The enzyme catalyses L-isoleucine + 2-oxoglutarate = (S)-3-methyl-2-oxopentanoate + L-glutamate. The catalysed reaction is L-valine + 2-oxoglutarate = 3-methyl-2-oxobutanoate + L-glutamate. It participates in amino-acid biosynthesis; L-isoleucine biosynthesis; L-isoleucine from 2-oxobutanoate: step 4/4. Its pathway is amino-acid biosynthesis; L-leucine biosynthesis; L-leucine from 3-methyl-2-oxobutanoate: step 4/4. The protein operates within amino-acid biosynthesis; L-valine biosynthesis; L-valine from pyruvate: step 4/4. Inhibited by canaline. In terms of biological role, transaminates branched-chain amino acids and ketoglutarate. The protein is Branched-chain-amino-acid aminotransferase 2 (ilvK) of Bacillus subtilis (strain 168).